Consider the following 471-residue polypeptide: Argininosuccinate lyase (471 aa).

The protein belongs to the lyase 1 family. Argininosuccinate lyase subfamily.

It localises to the cytoplasm. It catalyses the reaction 2-(N(omega)-L-arginino)succinate = fumarate + L-arginine. It participates in amino-acid biosynthesis; L-arginine biosynthesis; L-arginine from L-ornithine and carbamoyl phosphate: step 3/3. In Ehrlichia canis (strain Jake), this protein is Argininosuccinate lyase.